Here is a 501-residue protein sequence, read N- to C-terminus: Aspartyl/glutamyl-tRNA(Asn/Gln) amidotransferase subunit B (501 aa).

The protein belongs to the GatB/GatE family. GatB subfamily. As to quaternary structure, heterotrimer of A, B and C subunits.

The enzyme catalyses L-glutamyl-tRNA(Gln) + L-glutamine + ATP + H2O = L-glutaminyl-tRNA(Gln) + L-glutamate + ADP + phosphate + H(+). The catalysed reaction is L-aspartyl-tRNA(Asn) + L-glutamine + ATP + H2O = L-asparaginyl-tRNA(Asn) + L-glutamate + ADP + phosphate + 2 H(+). Its function is as follows. Allows the formation of correctly charged Asn-tRNA(Asn) or Gln-tRNA(Gln) through the transamidation of misacylated Asp-tRNA(Asn) or Glu-tRNA(Gln) in organisms which lack either or both of asparaginyl-tRNA or glutaminyl-tRNA synthetases. The reaction takes place in the presence of glutamine and ATP through an activated phospho-Asp-tRNA(Asn) or phospho-Glu-tRNA(Gln). The sequence is that of Aspartyl/glutamyl-tRNA(Asn/Gln) amidotransferase subunit B from Agrobacterium fabrum (strain C58 / ATCC 33970) (Agrobacterium tumefaciens (strain C58)).